Here is a 400-residue protein sequence, read N- to C-terminus: Subtilisin-like protease 7 (400 aa).

The N-terminal stretch at 1–20 is a signal peptide; that stretch reads MGFITKAIPLALAAASVING. A propeptide spanning residues 21–119 is cleaved from the precursor; it reads AEIMETRAGV…IERDARVQIN (99 aa). One can recognise an Inhibitor I9 domain in the interval 36–118; the sequence is KYIVVMNDGM…YIERDARVQI (83 aa). The N-linked (GlcNAc...) asparagine glycan is linked to asparagine 58. The 272-residue stretch at 129–400 folds into the Peptidase S8 domain; the sequence is SWGLARVGSK…SKLINNGSGM (272 aa). Active-site charge relay system residues include aspartate 161 and histidine 192. Asparagine 222 and asparagine 252 each carry an N-linked (GlcNAc...) asparagine glycan. The active-site Charge relay system is the serine 346. Asparagine 396 carries N-linked (GlcNAc...) asparagine glycosylation.

This sequence belongs to the peptidase S8 family.

Its subcellular location is the secreted. In terms of biological role, secreted subtilisin-like serine protease with keratinolytic activity that contributes to pathogenicity. This chain is Subtilisin-like protease 7 (SUB7), found in Trichophyton verrucosum (Cattle ringworm fungus).